We begin with the raw amino-acid sequence, 196 residues long: DNA polymerase epsilon subunit D (196 aa).

Residues 125 to 196 (RKKEKLDSGE…ETRVQNLEQT (72 aa)) form a disordered region. Residues 133 to 143 (GEVDADGDIDM) are compositionally biased toward acidic residues. Over residues 144–159 (GEDKENVPVEKVKEHD) the composition is skewed to basic and acidic residues. The segment covering 160–173 (EIEEQGDALQDVEE) has biased composition (acidic residues). Over residues 174–188 (SSEKKQKTESQDVET) the composition is skewed to basic and acidic residues. Serine 183 carries the post-translational modification Phosphoserine; by ATM or ATR.

In terms of assembly, DNA polymerase epsilon is a heterotetramer consisting of POL2, DPB2, DPB3 and DPB4. Component of the ISW2 complex, which at least consists of ISW2, ITC1, DLS1 and DPB4.

It is found in the nucleus. Functionally, as accessory component of the DNA polymerase epsilon (DNA polymerase II) participates in chromosomal DNA replication. It is required during synthesis of the leading and lagging DNA strands at the replication fork and binds at/or near replication origins and moves along DNA with the replication fork. It has 3'-5' proofreading exonuclease activity that correct errors arising during DNA replication. It is also involved in DNA synthesis during DNA repair. Also functions as a component of the ISW2 complex, which acts in remodeling the chromatin by catalyzing an ATP-dependent alteration in the structure of nucleosomal DNA. The ISW2 complex is involved in coordinating transcriptional repression and in inheritance of telomeric silencing. It is involved in repression of MAT a-specific genes, INO1, and early meiotic genes during mitotic growth dependent upon transcription factor UME6 and in a parallel pathway to the RPD3-SIN3 histone deacetylase complex. The chain is DNA polymerase epsilon subunit D (DPB4) from Saccharomyces cerevisiae (strain ATCC 204508 / S288c) (Baker's yeast).